Consider the following 262-residue polypeptide: Ornithine carbamoyltransferase (262 aa).

Carbamoyl phosphate is bound by residues Ser3 to Arg7, Gln30, Arg54, and His81 to Gln84. Residues Asn114, Asp178, and Ser182 to Met183 contribute to the L-ornithine site. Carbamoyl phosphate contacts are provided by residues His219 to Pro222 and Thr247.

The protein belongs to the aspartate/ornithine carbamoyltransferase superfamily. OTCase family.

It is found in the cytoplasm. It carries out the reaction carbamoyl phosphate + L-ornithine = L-citrulline + phosphate + H(+). It participates in amino-acid biosynthesis; L-arginine biosynthesis; L-arginine from L-ornithine and carbamoyl phosphate: step 1/3. The polypeptide is Ornithine carbamoyltransferase (argF) (Neisseria cinerea).